A 120-amino-acid chain; its full sequence is Ribonuclease P protein component (120 aa).

Belongs to the RnpA family. Consists of a catalytic RNA component (M1 or rnpB) and a protein subunit.

The enzyme catalyses Endonucleolytic cleavage of RNA, removing 5'-extranucleotides from tRNA precursor.. Its function is as follows. RNaseP catalyzes the removal of the 5'-leader sequence from pre-tRNA to produce the mature 5'-terminus. It can also cleave other RNA substrates such as 4.5S RNA. The protein component plays an auxiliary but essential role in vivo by binding to the 5'-leader sequence and broadening the substrate specificity of the ribozyme. This is Ribonuclease P protein component from Microcystis aeruginosa (strain NIES-843 / IAM M-2473).